The following is a 65-amino-acid chain: Toxin NaTx-22 (65 aa).

Residues 1 to 64 form the LCN-type CS-alpha/beta domain; it reads KDGYPVIKTT…TYPIPGKTCK (64 aa). 4 disulfide bridges follow: cysteine 12–cysteine 63, cysteine 16–cysteine 39, cysteine 25–cysteine 44, and cysteine 29–cysteine 46.

This sequence belongs to the long (4 C-C) scorpion toxin superfamily. Sodium channel inhibitor family. In terms of tissue distribution, expressed by the venom gland.

The protein resides in the secreted. Probable sodium channel inhibitor. In Centruroides sculpturatus (Arizona bark scorpion), this protein is Toxin NaTx-22.